The chain runs to 868 residues: MDSYFSAKNSTLAGDMNATWPASHGFNATGDPPSMSITRLFPALLECFGIVLCGYIAGRANIITSTQAKGLGNFVSRFALPALLFKNMVVLNFSNVDWAFLYSVLIGKASVFFIVCVLTLLVASPESRFSKAGLFPIFATQSNDFALGYPIVEALYQSTYPEYLQYIYLVAPISLMMLNPIGFIFCEIQKSKDTQNASQNKAKIVGLGFLRVLQNPIVFMVFVGIAFNFILDKKIPVYMENFLDGLANSFSGSALFYLGLTMVGKIRRLKKSAFVVLTLLITAKLLVLPLLCREMVELLDKGDSVVNHTSLSNYAFLYGVFPVAPGVAIFATQFNMEVEIITSGMVISTFVSAPIMYVSAWLLTFPTMDAKPLAYAIQNVSFDISIISLVSLIWSLSILLLSKKYKQLPHMLTANLLIAQTIVCAGMMIWNFVKEKNFVGQILVFVLLYSSLYSTYLWTGLLAVSLFLLKKRESVQLPVGIIIISGWGIPALLVGVLLITGKHNGDSIDSAFFYGKEQMITTAVTLFCSILIAGVSLMCMNRTTQAGHYEGFGQSQNHKPVEPGSTAFEENPAPTNEPELFPSSIPETSCCSCSLGNGELRCPSIEPVTNSSASGPMPSSFEKTDHCVSRCDSQSCILAQEEEQYLQSGDPQLTRHVLLCLLLIIGLFANLSSCLWWLFNHETGRLYVELQFFCAVFNFGQGFISFGIFGLDKHLIILPFKRRLEFLWNNKEAAADRESPVSEEIKMTCQQFVHYHRDLCIRNIVRERRCGAKTSAGTFCGCDLVNWLIEVGLASDRGEAVIYGDRLVQGGVIQHITNEYEFRDEYLFYRFLQKSPEQSPPARTLRDHQEESYKEIGHSSPPSVSPKT.

Topologically, residues 1–36 (MDSYFSAKNSTLAGDMNATWPASHGFNATGDPPSMS) are lumenal. Residues 1–368 (MDSYFSAKNS…SAWLLTFPTM (368 aa)) are PIN-like transporter. Asn9, Asn17, and Asn27 each carry an N-linked (GlcNAc...) asparagine glycan. Residues 37 to 57 (ITRLFPALLECFGIVLCGYIA) traverse the membrane as a helical segment. Residues Phe41 and Tyr55 each coordinate cholesterol. Topologically, residues 58–77 (GRANIITSTQAKGLGNFVSR) are cytoplasmic. The helical transmembrane segment at 78 to 98 (FALPALLFKNMVVLNFSNVDW) threads the bilayer. Topologically, residues 99 to 102 (AFLY) are lumenal. A helical transmembrane segment spans residues 103–123 (SVLIGKASVFFIVCVLTLLVA). Residues 124-131 (SPESRFSK) lie on the Cytoplasmic side of the membrane. A discontinuously helical transmembrane segment spans residues 132–152 (AGLFPIFATQSNDFALGYPIV). The Lumenal portion of the chain corresponds to 153–165 (EALYQSTYPEYLQ). The helical transmembrane segment at 166–186 (YIYLVAPISLMMLNPIGFIFC) threads the bilayer. Over 187 to 211 (EIQKSKDTQNASQNKAKIVGLGFLR) the chain is Cytoplasmic. The discontinuously helical transmembrane segment at 212–232 (VLQNPIVFMVFVGIAFNFILD) threads the bilayer. The Lumenal portion of the chain corresponds to 233–241 (KKIPVYMEN). Residues 242 to 262 (FLDGLANSFSGSALFYLGLTM) traverse the membrane as a discontinuously helical segment. At 263–271 (VGKIRRLKK) the chain is on the cytoplasmic side. Cholesterol contacts are provided by Gly264, Lys265, and Ile266. A helical membrane pass occupies residues 272–292 (SAFVVLTLLITAKLLVLPLLC). The Lumenal portion of the chain corresponds to 293–313 (REMVELLDKGDSVVNHTSLSN). Asn307 carries an N-linked (GlcNAc...) asparagine glycan. A discontinuously helical transmembrane segment spans residues 314 to 334 (YAFLYGVFPVAPGVAIFATQF). The Cytoplasmic portion of the chain corresponds to 335–344 (NMEVEIITSG). A helical membrane pass occupies residues 345–365 (MVISTFVSAPIMYVSAWLLTF). The Lumenal segment spans residues 366 to 379 (PTMDAKPLAYAIQN). Positions 378-715 (QNVSFDISII…FGIFGLDKHL (338 aa)) are GPCR. Residue Asn379 is glycosylated (N-linked (GlcNAc...) asparagine). The helical transmembrane segment at 380 to 400 (VSFDISIISLVSLIWSLSILL) threads the bilayer. Topologically, residues 401–412 (LSKKYKQLPHML) are cytoplasmic. Residues 413-433 (TANLLIAQTIVCAGMMIWNFV) form a helical membrane-spanning segment. At 434 to 436 (KEK) the chain is on the lumenal side. The helical transmembrane segment at 437 to 457 (NFVGQILVFVLLYSSLYSTYL) threads the bilayer. The Cytoplasmic segment spans residues 458 to 478 (WTGLLAVSLFLLKKRESVQLP). A helical membrane pass occupies residues 479 to 499 (VGIIIISGWGIPALLVGVLLI). At 500-518 (TGKHNGDSIDSAFFYGKEQ) the chain is on the lumenal side. A helical transmembrane segment spans residues 519 to 539 (MITTAVTLFCSILIAGVSLMC). Residues 540 to 658 (MNRTTQAGHY…GDPQLTRHVL (119 aa)) lie on the Cytoplasmic side of the membrane. Residues 550–582 (EGFGQSQNHKPVEPGSTAFEENPAPTNEPELFP) form a disordered region. Cholesterol is bound at residue Arg655. The helical transmembrane segment at 659–679 (LCLLLIIGLFANLSSCLWWLF) threads the bilayer. The Lumenal segment spans residues 680–689 (NHETGRLYVE). A helical membrane pass occupies residues 690 to 710 (LQFFCAVFNFGQGFISFGIFG). Residues 711–868 (LDKHLIILPF…SSPPSVSPKT (158 aa)) lie on the Cytoplasmic side of the membrane. The DEP domain maps to 755-833 (YHRDLCIRNI…DEYLFYRFLQ (79 aa)). The disordered stretch occupies residues 836 to 868 (PEQSPPARTLRDHQEESYKEIGHSSPPSVSPKT). The segment covering 844–857 (TLRDHQEESYKEIG) has biased composition (basic and acidic residues).

As to quaternary structure, homodimer; via the transporter region and DEP domain. Interacts with the GATOR1 complex; preventing interaction between GATOR1 and KICSTOR; interaction is disrupted upon cholesterol starvation. Widely expressed in adult tissues and during development. In brain, widely distributed in forebrain regions, while it shows a more restricted distribution in the midbrain and hindbrain regions. Expressed at highest level in the lateral part of striatum and hippocampus.

The protein resides in the lysosome membrane. Functionally, cholesterol-binding protein that acts as a regulator of mTORC1 signaling pathway. Acts as a sensor of cholesterol to signal cholesterol sufficiency to mTORC1: in presence of cholesterol, binds cholesterol, leading to disruption of the interaction between the GATOR1 and KICSTOR complexes and promotion of mTORC1 signaling. Upon cholesterol starvation, GPR155/LYCHOS is unable to perturb the association between GATOR1 and KICSTOR, leading to mTORC1 signaling inhibition. Binds indole-3-acetic acid and may play a role in tryptophan metabolism. The polypeptide is Lysosomal cholesterol signaling protein (Mus musculus (Mouse)).